We begin with the raw amino-acid sequence, 187 residues long: Elongation factor P (187 aa).

The protein belongs to the elongation factor P family.

It localises to the cytoplasm. The protein operates within protein biosynthesis; polypeptide chain elongation. Involved in peptide bond synthesis. Stimulates efficient translation and peptide-bond synthesis on native or reconstituted 70S ribosomes in vitro. Probably functions indirectly by altering the affinity of the ribosome for aminoacyl-tRNA, thus increasing their reactivity as acceptors for peptidyl transferase. This Helicobacter pylori (strain J99 / ATCC 700824) (Campylobacter pylori J99) protein is Elongation factor P (efp).